A 353-amino-acid polypeptide reads, in one-letter code: Peroxidase 34 (353 aa).

The signal sequence occupies residues 1-30; sequence MHFSSSSTSSTWTILITLGCLMLHASLSAA. At Q31 the chain carries Pyrrolidone carboxylic acid. 4 disulfides stabilise this stretch: C41–C121, C74–C79, C127–C331, and C207–C239. Residue N43 is glycosylated (N-linked (GlcNAc...) asparagine). Catalysis depends on H72, which acts as the Proton acceptor. 5 residues coordinate Ca(2+): D73, V76, G78, D80, and S82. An N-linked (GlcNAc...) asparagine glycan is attached at N87. Substrate is bound at residue P169. H200 is a binding site for heme b. T201 is a binding site for Ca(2+). N216, N228, and N244 each carry an N-linked (GlcNAc...) asparagine glycan. Residues D252, T255, and D260 each coordinate Ca(2+). N285 is a glycosylation site (N-linked (GlcNAc...) asparagine).

The protein belongs to the peroxidase family. Classical plant (class III) peroxidase subfamily. Requires heme b as cofactor. Ca(2+) serves as cofactor. As to expression, preferentially expressed in roots, but also detected in flowers, leaves and stems.

The protein resides in the secreted. It localises to the vacuole. It catalyses the reaction 2 a phenolic donor + H2O2 = 2 a phenolic radical donor + 2 H2O. Functionally, removal of H(2)O(2), oxidation of toxic reductants, biosynthesis and degradation of lignin, suberization, auxin catabolism, response to environmental stresses such as wounding, pathogen attack and oxidative stress. These functions might be dependent on each isozyme/isoform in each plant tissue. In terms of biological role, may be implicated in the systemic acquired resistance response via the salicylic acid signal transduction pathway. Exhibits a Ca(2+)-pectate binding affinity which could be interpreted in vivo as a specificity to interact with the pectic structure of the cell wall. The sequence is that of Peroxidase 34 (PER34) from Arabidopsis thaliana (Mouse-ear cress).